Reading from the N-terminus, the 192-residue chain is Erythropoietin (192 aa).

A signal peptide spans 1–27 (MGVHECPAWLWLLLSLVSLPLGLPVPG). Disulfide bonds link cysteine 34–cysteine 187 and cysteine 56–cysteine 60. Asparagine 51 carries N-linked (GlcNAc...) asparagine glycosylation. N-linked (GlcNAc...) asparagine glycans are attached at residues asparagine 65 and asparagine 110. Serine 152 carries an O-linked (GalNAc...) serine glycan.

This sequence belongs to the EPO/TPO family. Produced by kidney or liver of adult mammals and by liver of fetal or neonatal mammals.

Its subcellular location is the secreted. Hormone involved in the regulation of erythrocyte proliferation and differentiation and the maintenance of a physiological level of circulating erythrocyte mass. Binds to EPOR leading to EPOR dimerization and JAK2 activation thereby activating specific downstream effectors, including STAT1 and STAT3. The chain is Erythropoietin (EPO) from Macaca fascicularis (Crab-eating macaque).